Here is a 214-residue protein sequence, read N- to C-terminus: Adenylate kinase (214 aa).

Residue 10–15 participates in ATP binding; that stretch reads GAGKGT. Positions 30–59 are NMP; the sequence is STGDMFRDHKARGTEIGKQVQAIMDGGGLV. AMP is bound by residues Thr31, Arg36, 57–59, 85–88, and Gln92; these read GLV and GYPR. The interval 126–163 is LID; the sequence is GRRSCPRCGAVYHVSQNPPRRAGYCDRDDAELVQREDD. Arg127 provides a ligand contact to ATP. The Zn(2+) site is built by Cys130 and Cys133. 136–137 is a binding site for ATP; sequence VY. Zn(2+)-binding residues include Cys150 and Asp153. Arg160 and Arg171 together coordinate AMP. Position 199 (Gly199) interacts with ATP.

Belongs to the adenylate kinase family. Monomer.

The protein localises to the cytoplasm. The catalysed reaction is AMP + ATP = 2 ADP. It functions in the pathway purine metabolism; AMP biosynthesis via salvage pathway; AMP from ADP: step 1/1. In terms of biological role, catalyzes the reversible transfer of the terminal phosphate group between ATP and AMP. Plays an important role in cellular energy homeostasis and in adenine nucleotide metabolism. The chain is Adenylate kinase from Anaeromyxobacter dehalogenans (strain 2CP-C).